The chain runs to 50 residues: Large ribosomal subunit protein bL36B (50 aa).

This sequence belongs to the bacterial ribosomal protein bL36 family.

The sequence is that of Large ribosomal subunit protein bL36B from Pseudomonas aeruginosa (strain UCBPP-PA14).